Consider the following 337-residue polypeptide: Low-density lipoprotein receptor class A domain-containing protein 3 (337 aa).

An N-terminal signal peptide occupies residues 1-13 (MWLLYLILGSVES). The Extracellular portion of the chain corresponds to 14–169 (QLLPGNNHTT…NQLLYYPSIT (156 aa)). Asparagine 20 carries an N-linked (GlcNAc...) asparagine glycan. 3 consecutive LDL-receptor class A domains span residues 24-61 (ECNIPGNFMCSNGRCIPGGWQCDGNPDCFDESDEKECP), 66-103 (RCGPNFFPCTSGIHCIIARFQCNGFEDCPDGSDEENCT), and 108-144 (LCSNSRFHCKNHLCIDKSFVCDGQNNCLDNSDEEHCH). 9 cysteine pairs are disulfide-bonded: cysteine 25-cysteine 38, cysteine 33-cysteine 51, cysteine 45-cysteine 60, cysteine 67-cysteine 80, cysteine 74-cysteine 93, cysteine 87-cysteine 102, cysteine 109-cysteine 121, cysteine 116-cysteine 134, and cysteine 128-cysteine 143. Asparagine 101 carries N-linked (GlcNAc...) asparagine glycosylation. The chain crosses the membrane as a helical span at residues 170-190 (YTIIGSSVIFVLVVALLALVL). Residues 191–337 (HHQRKRNLMS…DDLPSTEVDV (147 aa)) are Cytoplasmic-facing. Positions 243–253 (QQPVSVESPPS) are enriched in polar residues. The interval 243–337 (QQPVSVESPP…DDLPSTEVDV (95 aa)) is disordered. Residues 291 to 303 (RSRTGSSASAGST) are compositionally biased toward low complexity.

This sequence belongs to the LDLR family.

It is found in the cell membrane. This chain is Low-density lipoprotein receptor class A domain-containing protein 3, found in Xenopus tropicalis (Western clawed frog).